The primary structure comprises 759 residues: Arylphorin subunit A4 (759 aa).

The N-terminal stretch at 1–16 is a signal peptide; the sequence is MKIAIVLLAIIALVAA.

Belongs to the hemocyanin family. In terms of assembly, heterohexamer. As to expression, fat body.

It localises to the secreted. It is found in the extracellular space. In terms of biological role, arylphorin is a larval storage protein (LSP) which may serve as a storage protein used primarily as a source of aromatic amino acids for protein synthesis during metamorphosis. It is a constituent of the sclerotizing system of the cuticle, and serves as a carrier for ecdysteroid hormone. The chain is Arylphorin subunit A4 from Calliphora vicina (Blue blowfly).